A 223-amino-acid polypeptide reads, in one-letter code: Fibroblast growth factor-binding protein 2 (223 aa).

Residues 1–19 (MKFVPCLLLVTLSCLGTLG) form the signal peptide. The segment at 23 to 45 (RQKQGSTGEEFHFQTGGRDSCTM) is disordered. Intrachain disulfides connect C43–C63, C72–C106, and C81–C117. The interval 120-201 (AGPQAHMQQV…PGGNEEAKKK (82 aa)) is disordered. The segment covering 125–144 (HMQQVTSSLKGSPEPNQQPE) has biased composition (polar residues). The span at 175–186 (AKPTTRPTAKPT) shows a compositional bias: low complexity. Residues C206 and C214 are joined by a disulfide bond.

This sequence belongs to the fibroblast growth factor-binding protein family. As to expression, expressed in serum, peripheral leukocytes and cytotoxic T-lymphocytes, but not in granulocytes and monocytes (at protein level).

The protein localises to the secreted. The protein resides in the extracellular space. In Homo sapiens (Human), this protein is Fibroblast growth factor-binding protein 2 (FGFBP2).